The chain runs to 332 residues: DNA-directed RNA polymerase subunit alpha (332 aa).

Residues 1–230 (MKKITTSAYM…KQMSIFNNVL (230 aa)) are alpha N-terminal domain (alpha-NTD). The alpha C-terminal domain (alpha-CTD) stretch occupies residues 246-332 (EHSKLLESVE…LRKKISELKS (87 aa)).

The protein belongs to the RNA polymerase alpha chain family. Homodimer. The RNAP catalytic core consists of 2 alpha, 1 beta, 1 beta' and 1 omega subunit. When a sigma factor is associated with the core the holoenzyme is formed, which can initiate transcription.

It catalyses the reaction RNA(n) + a ribonucleoside 5'-triphosphate = RNA(n+1) + diphosphate. Functionally, DNA-dependent RNA polymerase catalyzes the transcription of DNA into RNA using the four ribonucleoside triphosphates as substrates. This Campylobacter fetus subsp. fetus (strain 82-40) protein is DNA-directed RNA polymerase subunit alpha.